Consider the following 40-residue polypeptide: Sarcotoxin-1D (40 aa).

Belongs to the cecropin family.

It is found in the secreted. Sarcotoxins, which are potent bactericidal proteins, are produced in response to injury. They are cytotoxic to both Gram-positive and Gram-negative bacteria. The polypeptide is Sarcotoxin-1D (Sarcophaga peregrina (Flesh fly)).